A 453-amino-acid chain; its full sequence is UDP-glycosyltransferase 79B6 (453 aa).

UDP-alpha-D-glucose contacts are provided by residues Ser266, 325–327, 342–350, and 364–367; these read VQQ, HCGFGSMWE, and LGEQ.

Belongs to the UDP-glycosyltransferase family.

In Arabidopsis thaliana (Mouse-ear cress), this protein is UDP-glycosyltransferase 79B6 (UGT79B6).